Consider the following 95-residue polypeptide: UPF0235 protein Pcar_0617 (95 aa).

Belongs to the UPF0235 family.

The protein is UPF0235 protein Pcar_0617 of Syntrophotalea carbinolica (strain DSM 2380 / NBRC 103641 / GraBd1) (Pelobacter carbinolicus).